The sequence spans 404 residues: Na(+)/H(+) antiporter NhaA 2 (404 aa).

11 consecutive transmembrane segments (helical) span residues Gly-24 to Gly-44, Val-67 to Ile-87, Ile-103 to Phe-123, Gly-132 to Ala-152, Val-161 to Phe-181, Ser-184 to Ala-204, Ile-216 to Ala-236, Thr-266 to Ile-286, Ile-303 to Ile-323, Leu-339 to Leu-359, and Met-372 to Ile-392.

The protein belongs to the NhaA Na(+)/H(+) (TC 2.A.33) antiporter family.

It localises to the cell membrane. It carries out the reaction Na(+)(in) + 2 H(+)(out) = Na(+)(out) + 2 H(+)(in). In terms of biological role, na(+)/H(+) antiporter that extrudes sodium in exchange for external protons. The polypeptide is Na(+)/H(+) antiporter NhaA 2 (Clostridium beijerinckii (strain ATCC 51743 / NCIMB 8052) (Clostridium acetobutylicum)).